A 126-amino-acid chain; its full sequence is Large ribosomal subunit protein bL12 (126 aa).

The protein belongs to the bacterial ribosomal protein bL12 family. Homodimer. Part of the ribosomal stalk of the 50S ribosomal subunit. Forms a multimeric L10(L12)X complex, where L10 forms an elongated spine to which 2 to 4 L12 dimers bind in a sequential fashion. Binds GTP-bound translation factors.

Its function is as follows. Forms part of the ribosomal stalk which helps the ribosome interact with GTP-bound translation factors. Is thus essential for accurate translation. In Solibacter usitatus (strain Ellin6076), this protein is Large ribosomal subunit protein bL12.